Here is a 143-residue protein sequence, read N- to C-terminus: Cofilin (143 aa).

An ADF-H domain is found at 5–137 (GVAVSDEALK…AYESVLEKIS (133 aa)).

This sequence belongs to the actin-binding proteins ADF family.

Its subcellular location is the cytoplasm. The protein localises to the cytoskeleton. It is found in the nucleus matrix. Its function is as follows. Controls reversibly actin polymerization and depolymerization in a pH-sensitive manner. It has the ability to bind G- and F-actin in a 1:1 ratio of cofilin to actin. Binding to F-actin is regulated by tropomyosin. It is the major component of intranuclear and cytoplasmic actin rods. Required for accumulation of actin at the cell division site via depolymerizing actin at the cell ends. In association with myosin II has a role in the assembly of the contractile ring via severing actin filaments. Involved in the maintenance of the contractile ring once formed. In association with profilin and capping protein, has a role in the mitotic reorganization of the actin cytoskeleton. The polypeptide is Cofilin (COF1) (Ogataea parapolymorpha (strain ATCC 26012 / BCRC 20466 / JCM 22074 / NRRL Y-7560 / DL-1) (Yeast)).